The sequence spans 118 residues: Large ribosomal subunit protein uL18 (118 aa).

Belongs to the universal ribosomal protein uL18 family. In terms of assembly, part of the 50S ribosomal subunit; part of the 5S rRNA/L5/L18/L25 subcomplex. Contacts the 5S and 23S rRNAs.

This is one of the proteins that bind and probably mediate the attachment of the 5S RNA into the large ribosomal subunit, where it forms part of the central protuberance. In Zymomonas mobilis subsp. mobilis (strain ATCC 31821 / ZM4 / CP4), this protein is Large ribosomal subunit protein uL18.